A 296-amino-acid polypeptide reads, in one-letter code: HTH-type transcriptional activator AmpR (296 aa).

Residues 6-63 (LPLNALRAFEASARHLSFTRAAIELCVTQAAVSHQVKSLEERLGVALFKRLPRGLMLT) enclose the HTH lysR-type domain. Positions 23 to 42 (FTRAAIELCVTQAAVSHQVK) form a DNA-binding region, H-T-H motif. Positions 83–296 (LLERFEGGHY…EMAAVEARGR (214 aa)) are includes the LysR substrate-binding / effector-binding domain, involved in binding to specific cell-wall-derived muropeptide products, some of which have signaling functions, leading to disparate responses such as antibiotic resistance, virulence, and host cell inflammation. Residues 91–289 (HYRDVLTVGA…AFRGWLLEMA (199 aa)) form the LysR substrate-binding domain.

It belongs to the LysR transcriptional regulatory family. As to quaternary structure, homodimer.

The protein localises to the cytoplasm. Its subcellular location is the membrane. Its function is as follows. Transcription regulator that plays a critical role in the expression of beta-lactamase AmpC, acting by positive regulation of the ampC gene. Has a wider role in the regulation of expression of genes involved in proteolysis, quorum sensing, and virulence. Acts by binding directly to the promoter region of the ampC gene. Probably does not regulate transcription of its own gene. The sequence is that of HTH-type transcriptional activator AmpR (ampR) from Pseudomonas aeruginosa (strain ATCC 15692 / DSM 22644 / CIP 104116 / JCM 14847 / LMG 12228 / 1C / PRS 101 / PAO1).